The following is a 572-amino-acid chain: Potassium-transporting ATPase potassium-binding subunit (572 aa).

The next 10 membrane-spanning stretches (helical) occupy residues 6–26 (ILFV…GTYI), 66–86 (FFSL…VLLL), 135–155 (ALAV…IVLI), 177–197 (IFWI…FQGV), 251–271 (TIIT…ALTY), 283–303 (GWMI…VMTI), 382–402 (IFGG…LAVF), 428–448 (MFAL…AAVI), 493–513 (ITIA…VMML), and 537–557 (FIFS…TIFP).

This sequence belongs to the KdpA family. In terms of assembly, the system is composed of three essential subunits: KdpA, KdpB and KdpC.

The protein localises to the cell inner membrane. In terms of biological role, part of the high-affinity ATP-driven potassium transport (or Kdp) system, which catalyzes the hydrolysis of ATP coupled with the electrogenic transport of potassium into the cytoplasm. This subunit binds the periplasmic potassium ions and delivers the ions to the membrane domain of KdpB through an intramembrane tunnel. The polypeptide is Potassium-transporting ATPase potassium-binding subunit (Francisella philomiragia subsp. philomiragia (strain ATCC 25017 / CCUG 19701 / FSC 153 / O#319-036)).